A 372-amino-acid polypeptide reads, in one-letter code: Lung adenoma susceptibility protein 2 (372 aa).

The signal sequence occupies residues 1-31 (MAKSKTKHRLCSQESSVSALLASCTLSGSNS). The residue at position 161 (serine 161) is a Phosphoserine. Residues 248-268 (KSPVPVNSDDSPQQTSRAKSA) form a disordered region. Polar residues predominate over residues 255–265 (SDDSPQQTSRA).

The protein localises to the secreted. Might play a role in cell proliferation. The polypeptide is Lung adenoma susceptibility protein 2 (LAS2) (Homo sapiens (Human)).